A 94-amino-acid chain; its full sequence is MITIKAEARQGQGKGASRRLRSAGKFPAIVYGGSEAPVSIELDHDSVKNQEVKEGFYGETLILSIDGKEVQVKVQAVQRHVYKPKLTHIDFVRV.

This sequence belongs to the bacterial ribosomal protein bL25 family. Part of the 50S ribosomal subunit; part of the 5S rRNA/L5/L18/L25 subcomplex. Contacts the 5S rRNA. Binds to the 5S rRNA independently of L5 and L18.

In terms of biological role, this is one of the proteins that binds to the 5S RNA in the ribosome where it forms part of the central protuberance. The polypeptide is Large ribosomal subunit protein bL25 (Pectobacterium atrosepticum (strain SCRI 1043 / ATCC BAA-672) (Erwinia carotovora subsp. atroseptica)).